Consider the following 229-residue polypeptide: Protein AF_2251 (229 aa).

It belongs to the CinA family.

The sequence is that of Protein AF_2251 from Archaeoglobus fulgidus (strain ATCC 49558 / DSM 4304 / JCM 9628 / NBRC 100126 / VC-16).